An 873-amino-acid polypeptide reads, in one-letter code: Alanine--tRNA ligase (873 aa).

Residues histidine 557, histidine 561, cysteine 659, and histidine 663 each contribute to the Zn(2+) site.

The protein belongs to the class-II aminoacyl-tRNA synthetase family. Zn(2+) is required as a cofactor.

It localises to the cytoplasm. The enzyme catalyses tRNA(Ala) + L-alanine + ATP = L-alanyl-tRNA(Ala) + AMP + diphosphate. Functionally, catalyzes the attachment of alanine to tRNA(Ala) in a two-step reaction: alanine is first activated by ATP to form Ala-AMP and then transferred to the acceptor end of tRNA(Ala). Also edits incorrectly charged Ser-tRNA(Ala) and Gly-tRNA(Ala) via its editing domain. In Nitrosococcus oceani (strain ATCC 19707 / BCRC 17464 / JCM 30415 / NCIMB 11848 / C-107), this protein is Alanine--tRNA ligase.